The following is a 256-amino-acid chain: 5-oxoprolinase subunit A (256 aa).

This sequence belongs to the LamB/PxpA family. As to quaternary structure, forms a complex composed of PxpA, PxpB and PxpC.

The catalysed reaction is 5-oxo-L-proline + ATP + 2 H2O = L-glutamate + ADP + phosphate + H(+). Catalyzes the cleavage of 5-oxoproline to form L-glutamate coupled to the hydrolysis of ATP to ADP and inorganic phosphate. The polypeptide is 5-oxoprolinase subunit A (Geobacillus thermodenitrificans (strain NG80-2)).